Consider the following 394-residue polypeptide: Acetate kinase (394 aa).

Asparagine 7 is a Mg(2+) binding site. Lysine 14 serves as a coordination point for ATP. Residue arginine 88 participates in substrate binding. Residue aspartate 145 is the Proton donor/acceptor of the active site. Residues 205 to 209, 279 to 281, and 327 to 331 contribute to the ATP site; these read HLGNG, DFR, and GIGEN. Position 379 (glutamate 379) interacts with Mg(2+).

The protein belongs to the acetokinase family. As to quaternary structure, homodimer. Requires Mg(2+) as cofactor. The cofactor is Mn(2+).

The protein localises to the cytoplasm. It catalyses the reaction acetate + ATP = acetyl phosphate + ADP. The protein operates within metabolic intermediate biosynthesis; acetyl-CoA biosynthesis; acetyl-CoA from acetate: step 1/2. Functionally, catalyzes the formation of acetyl phosphate from acetate and ATP. Can also catalyze the reverse reaction. The sequence is that of Acetate kinase from Campylobacter lari (strain RM2100 / D67 / ATCC BAA-1060).